The sequence spans 441 residues: GTPase Der (441 aa).

2 consecutive EngA-type G domains span residues 2-164 (HKVA…PADD) and 173-343 (IRIS…DKWQ). Residues 8-15 (GRPNVGKS), 55-59 (DTGGL), 116-119 (NKID), 179-186 (GRPNVGKS), 226-230 (DTAGI), and 288-291 (NKWD) contribute to the GTP site.

Belongs to the TRAFAC class TrmE-Era-EngA-EngB-Septin-like GTPase superfamily. EngA (Der) GTPase family. As to quaternary structure, associates with the 50S ribosomal subunit.

Its function is as follows. GTPase that plays an essential role in the late steps of ribosome biogenesis. This chain is GTPase Der, found in Deinococcus deserti (strain DSM 17065 / CIP 109153 / LMG 22923 / VCD115).